A 262-amino-acid chain; its full sequence is tRNA pseudouridine synthase A (262 aa).

Catalysis depends on Asp51, which acts as the Nucleophile. Substrate is bound at residue Tyr109.

It belongs to the tRNA pseudouridine synthase TruA family. Homodimer.

The catalysed reaction is uridine(38/39/40) in tRNA = pseudouridine(38/39/40) in tRNA. Functionally, formation of pseudouridine at positions 38, 39 and 40 in the anticodon stem and loop of transfer RNAs. The polypeptide is tRNA pseudouridine synthase A (Legionella pneumophila (strain Paris)).